The chain runs to 395 residues: Elongation factor Tu (395 aa).

Positions K10–V204 constitute a tr-type G domain. A G1 region spans residues G19–T26. G19–T26 lines the GTP pocket. T26 contacts Mg(2+). The G2 stretch occupies residues G60–N64. The tract at residues D81–G84 is G3. GTP is bound by residues D81–H85 and N136–D139. Residues N136 to D139 form a G4 region. The G5 stretch occupies residues S174–L176.

Belongs to the TRAFAC class translation factor GTPase superfamily. Classic translation factor GTPase family. EF-Tu/EF-1A subfamily. Monomer.

It localises to the cytoplasm. It carries out the reaction GTP + H2O = GDP + phosphate + H(+). GTP hydrolase that promotes the GTP-dependent binding of aminoacyl-tRNA to the A-site of ribosomes during protein biosynthesis. This chain is Elongation factor Tu, found in Lactiplantibacillus plantarum (strain ATCC BAA-793 / NCIMB 8826 / WCFS1) (Lactobacillus plantarum).